Here is a 447-residue protein sequence, read N- to C-terminus: Probable ribosomal RNA small subunit methyltransferase B (447 aa).

Residues 259–265 (CAAPGGK), Asp-283, Asp-310, and Asp-329 each bind S-adenosyl-L-methionine. The Nucleophile role is filled by Cys-382.

The protein belongs to the class I-like SAM-binding methyltransferase superfamily. RsmB/NOP family.

The protein resides in the cytoplasm. The catalysed reaction is cytidine(967) in 16S rRNA + S-adenosyl-L-methionine = 5-methylcytidine(967) in 16S rRNA + S-adenosyl-L-homocysteine + H(+). In terms of biological role, specifically methylates the cytosine at position 967 (m5C967) of 16S rRNA. The polypeptide is Probable ribosomal RNA small subunit methyltransferase B (Bacillus subtilis (strain 168)).